Here is a 257-residue protein sequence, read N- to C-terminus: Ribonuclease HII (257 aa).

In terms of domain architecture, RNase H type-2 spans 72 to 257 (ERVAGIDEVG…FSPVQKILQA (186 aa)). Asp-78, Glu-79, and Asp-170 together coordinate a divalent metal cation.

Belongs to the RNase HII family. Mn(2+) serves as cofactor. Requires Mg(2+) as cofactor.

It localises to the cytoplasm. The catalysed reaction is Endonucleolytic cleavage to 5'-phosphomonoester.. Its function is as follows. Endonuclease that specifically degrades the RNA of RNA-DNA hybrids. The sequence is that of Ribonuclease HII from Levilactobacillus brevis (strain ATCC 367 / BCRC 12310 / CIP 105137 / JCM 1170 / LMG 11437 / NCIMB 947 / NCTC 947) (Lactobacillus brevis).